The primary structure comprises 170 residues: uncharacterized protein (170 aa).

The protein localises to the mitochondrion. This is an uncharacterized protein from Arabidopsis thaliana (Mouse-ear cress).